The following is a 169-amino-acid chain: Ribosome maturation factor RimM (169 aa).

Residues E94–L168 enclose the PRC barrel domain.

The protein belongs to the RimM family. Binds ribosomal protein uS19.

It localises to the cytoplasm. Its function is as follows. An accessory protein needed during the final step in the assembly of 30S ribosomal subunit, possibly for assembly of the head region. Essential for efficient processing of 16S rRNA. May be needed both before and after RbfA during the maturation of 16S rRNA. It has affinity for free ribosomal 30S subunits but not for 70S ribosomes. This is Ribosome maturation factor RimM from Limosilactobacillus fermentum (strain NBRC 3956 / LMG 18251) (Lactobacillus fermentum).